The chain runs to 129 residues: Profilin-4 (129 aa).

Belongs to the profilin family.

It localises to the cytoplasm. Functionally, involved in male fertility. Required for manchette development and acrosome biogenesis during spermiogenesis. Binds in vitro to phospholipids, including phosphatidylinositol 3-phosphate (PtdIns(3)P), phosphatidylinositol 4,5-bisphosphate (PtdIns(4,5)P2), phosphatidylinositol 4-phosphate (PtdIns(4)P) and phosphatidic acid (PA). Contrary to other profilin family members, does not bind to actin in vitro. This is Profilin-4 (PFN4) from Bos taurus (Bovine).